The sequence spans 250 residues: Flavin-dependent thymidylate synthase (250 aa).

A ThyX domain is found at 7–233 (LRVQLIAKTD…PAVFADFEIA (227 aa)). FAD contacts are provided by residues S71, 95 to 97 (RHR), and Q103. Residues 92-95 (ELIR), 103-107 (QLSQR), and R172 contribute to the dUMP site. A ThyX motif motif is present at residues 95 to 105 (RHRHFSYSQLS). FAD is bound by residues 188 to 190 (NYR) and H194. R199 is a binding site for dUMP. R199 acts as the Involved in ionization of N3 of dUMP, leading to its activation in catalysis.

This sequence belongs to the thymidylate synthase ThyX family. In terms of assembly, homotetramer. It depends on FAD as a cofactor.

The catalysed reaction is dUMP + (6R)-5,10-methylene-5,6,7,8-tetrahydrofolate + NADPH + H(+) = dTMP + (6S)-5,6,7,8-tetrahydrofolate + NADP(+). It participates in pyrimidine metabolism; dTTP biosynthesis. Catalyzes the reductive methylation of 2'-deoxyuridine-5'-monophosphate (dUMP) to 2'-deoxythymidine-5'-monophosphate (dTMP) while utilizing 5,10-methylenetetrahydrofolate (mTHF) as the methyl donor, and NADPH and FADH(2) as the reductant. This Mycobacterium avium (strain 104) protein is Flavin-dependent thymidylate synthase.